We begin with the raw amino-acid sequence, 372 residues long: Glutamate 5-kinase (372 aa).

Lys6 contributes to the ATP binding site. Substrate is bound by residues Ser46, Asp133, and Asn145. Residues 165–166 (TD) and 207–213 (TGGMYTK) contribute to the ATP site. Residues 272-350 (NGFLFVDEGA…HDIESILGYK (79 aa)) form the PUA domain.

The protein belongs to the glutamate 5-kinase family.

The protein resides in the cytoplasm. It catalyses the reaction L-glutamate + ATP = L-glutamyl 5-phosphate + ADP. It participates in amino-acid biosynthesis; L-proline biosynthesis; L-glutamate 5-semialdehyde from L-glutamate: step 1/2. Functionally, catalyzes the transfer of a phosphate group to glutamate to form L-glutamate 5-phosphate. This chain is Glutamate 5-kinase, found in Caldanaerobacter subterraneus subsp. tengcongensis (strain DSM 15242 / JCM 11007 / NBRC 100824 / MB4) (Thermoanaerobacter tengcongensis).